A 504-amino-acid polypeptide reads, in one-letter code: Maturase K (504 aa).

This sequence belongs to the intron maturase 2 family. MatK subfamily.

The protein localises to the plastid. It localises to the chloroplast. In terms of biological role, usually encoded in the trnK tRNA gene intron. Probably assists in splicing its own and other chloroplast group II introns. This chain is Maturase K, found in Adenostoma fasciculatum (Chamise).